A 149-amino-acid polypeptide reads, in one-letter code: Large ribosomal subunit protein uL13 (149 aa).

The protein belongs to the universal ribosomal protein uL13 family. As to quaternary structure, part of the 50S ribosomal subunit.

This protein is one of the early assembly proteins of the 50S ribosomal subunit, although it is not seen to bind rRNA by itself. It is important during the early stages of 50S assembly. The polypeptide is Large ribosomal subunit protein uL13 (Prosthecochloris aestuarii (strain DSM 271 / SK 413)).